The primary structure comprises 90 residues: Translation initiation factor IF-1 (90 aa).

Residues 7 to 76 enclose the S1-like domain; that stretch reads KEDVIRMEGT…TRGRIVYRKK (70 aa).

The protein belongs to the IF-1 family. Component of the 30S ribosomal translation pre-initiation complex which assembles on the 30S ribosome in the order IF-2 and IF-3, IF-1 and N-formylmethionyl-tRNA(fMet); mRNA recruitment can occur at any time during PIC assembly.

Its subcellular location is the cytoplasm. Its function is as follows. One of the essential components for the initiation of protein synthesis. Stabilizes the binding of IF-2 and IF-3 on the 30S subunit to which N-formylmethionyl-tRNA(fMet) subsequently binds. Helps modulate mRNA selection, yielding the 30S pre-initiation complex (PIC). Upon addition of the 50S ribosomal subunit IF-1, IF-2 and IF-3 are released leaving the mature 70S translation initiation complex. The sequence is that of Translation initiation factor IF-1 from Fervidobacterium nodosum (strain ATCC 35602 / DSM 5306 / Rt17-B1).